The primary structure comprises 257 residues: Imidazole glycerol phosphate synthase subunit HisF (257 aa).

Catalysis depends on residues Asp-11 and Asp-130.

The protein belongs to the HisA/HisF family. In terms of assembly, heterodimer of HisH and HisF.

It localises to the cytoplasm. The enzyme catalyses 5-[(5-phospho-1-deoxy-D-ribulos-1-ylimino)methylamino]-1-(5-phospho-beta-D-ribosyl)imidazole-4-carboxamide + L-glutamine = D-erythro-1-(imidazol-4-yl)glycerol 3-phosphate + 5-amino-1-(5-phospho-beta-D-ribosyl)imidazole-4-carboxamide + L-glutamate + H(+). The protein operates within amino-acid biosynthesis; L-histidine biosynthesis; L-histidine from 5-phospho-alpha-D-ribose 1-diphosphate: step 5/9. Functionally, IGPS catalyzes the conversion of PRFAR and glutamine to IGP, AICAR and glutamate. The HisF subunit catalyzes the cyclization activity that produces IGP and AICAR from PRFAR using the ammonia provided by the HisH subunit. This is Imidazole glycerol phosphate synthase subunit HisF from Vibrio cholerae serotype O1 (strain ATCC 39541 / Classical Ogawa 395 / O395).